The primary structure comprises 654 residues: Fatty acid photodecarboxylase, chloroplastic (654 aa).

The transit peptide at 1–62 (MASITSRASA…RRGGALSARA (62 aa)) directs the protein to the chloroplast. FAD-binding positions include 93 to 94 (TA), Glu114, Leu162, Ser166, 170 to 173 (NATL), and Val298. 4 residues coordinate hexadecanoate: Cys432, Arg451, Tyr466, and Gln486. Gly622 serves as a coordination point for FAD.

Belongs to the GMC oxidoreductase family. FAD serves as cofactor.

Its subcellular location is the plastid. It localises to the chloroplast. The enzyme catalyses a long-chain fatty acid + hnu + H(+) = a long-chain alkane + CO2. It carries out the reaction hnu + hexadecanoate + H(+) = pentadecane + CO2. It catalyses the reaction hnu + octadecanoate + H(+) = heptadecane + CO2. The catalysed reaction is heptadecanoate + hnu + H(+) = hexadecane + CO2. The enzyme catalyses hnu + tetradecanoate + H(+) = tridecane + CO2. It carries out the reaction octanoate + hnu + H(+) = heptane + CO2. Its activity is regulated as follows. Activated by blue light and repressed by red light. Catalyzes the decarboxylation of free fatty acids to n-alkanes or n-alkenes in response to blue light. Substrate preference is toward fatty acids with C16 or C17 chains. Converts n-octanoic acid (C8 chain) more efficiently than palmitate (n-hexadecanoic acid, C16 chain) into n-heptane (C7 chain) and n-pentadecane (C15 chain), respectively, partly due to an autocatalytic effect of its n-heptane product. Saturated fatty acids are converted to alkanes, not alkenes. The decarboxylation is initiated through electron abstraction from the fatty acid by the photo-excited FAD. This is Fatty acid photodecarboxylase, chloroplastic from Chlorella variabilis (Green alga).